A 501-amino-acid chain; its full sequence is Protein anon-37Cs (501 aa).

It is found in the cytoplasm. Functionally, has a non-vital function. The chain is Protein anon-37Cs (anon-37Cs) from Drosophila simulans (Fruit fly).